A 179-amino-acid chain; its full sequence is Large ribosomal subunit protein uL6 (179 aa).

This sequence belongs to the universal ribosomal protein uL6 family. As to quaternary structure, part of the 50S ribosomal subunit.

Functionally, this protein binds to the 23S rRNA, and is important in its secondary structure. It is located near the subunit interface in the base of the L7/L12 stalk, and near the tRNA binding site of the peptidyltransferase center. In Saccharopolyspora erythraea (strain ATCC 11635 / DSM 40517 / JCM 4748 / NBRC 13426 / NCIMB 8594 / NRRL 2338), this protein is Large ribosomal subunit protein uL6.